We begin with the raw amino-acid sequence, 362 residues long: Holliday junction branch migration complex subunit RuvB (362 aa).

The tract at residues 4–186 (PDRPQRLVEQ…FGIPLRMQFY (183 aa)) is large ATPase domain (RuvB-L). ATP-binding positions include isoleucine 25, arginine 26, glycine 67, lysine 70, threonine 71, threonine 72, 133–135 (EDF), arginine 176, tyrosine 186, and arginine 223. Position 71 (threonine 71) interacts with Mg(2+). The segment at 187–257 (EPEELQLIVA…AAGGALTRLE (71 aa)) is small ATPAse domain (RuvB-S). Residues 260–362 (RLGFDAMDRR…GTPEGEGEDV (103 aa)) form a head domain (RuvB-H) region. The DNA site is built by arginine 296, arginine 315, and arginine 320.

The protein belongs to the RuvB family. As to quaternary structure, homohexamer. Forms an RuvA(8)-RuvB(12)-Holliday junction (HJ) complex. HJ DNA is sandwiched between 2 RuvA tetramers; dsDNA enters through RuvA and exits via RuvB. An RuvB hexamer assembles on each DNA strand where it exits the tetramer. Each RuvB hexamer is contacted by two RuvA subunits (via domain III) on 2 adjacent RuvB subunits; this complex drives branch migration. In the full resolvosome a probable DNA-RuvA(4)-RuvB(12)-RuvC(2) complex forms which resolves the HJ.

The protein resides in the cytoplasm. It catalyses the reaction ATP + H2O = ADP + phosphate + H(+). Functionally, the RuvA-RuvB-RuvC complex processes Holliday junction (HJ) DNA during genetic recombination and DNA repair, while the RuvA-RuvB complex plays an important role in the rescue of blocked DNA replication forks via replication fork reversal (RFR). RuvA specifically binds to HJ cruciform DNA, conferring on it an open structure. The RuvB hexamer acts as an ATP-dependent pump, pulling dsDNA into and through the RuvAB complex. RuvB forms 2 homohexamers on either side of HJ DNA bound by 1 or 2 RuvA tetramers; 4 subunits per hexamer contact DNA at a time. Coordinated motions by a converter formed by DNA-disengaged RuvB subunits stimulates ATP hydrolysis and nucleotide exchange. Immobilization of the converter enables RuvB to convert the ATP-contained energy into a lever motion, pulling 2 nucleotides of DNA out of the RuvA tetramer per ATP hydrolyzed, thus driving DNA branch migration. The RuvB motors rotate together with the DNA substrate, which together with the progressing nucleotide cycle form the mechanistic basis for DNA recombination by continuous HJ branch migration. Branch migration allows RuvC to scan DNA until it finds its consensus sequence, where it cleaves and resolves cruciform DNA. The chain is Holliday junction branch migration complex subunit RuvB from Rhodospirillum centenum (strain ATCC 51521 / SW).